The chain runs to 31 residues: Ice-structuring glycoprotein 3 (31 aa).

Residues T3, T6, T9, T12, T15, T18, T21, T24, T27, and T30 are each glycosylated (O-linked (GalNAc...) threonine).

Post-translationally, O-linked glycans consist of Gal-GalNAc disaccharides. The three proteins may differ only in the number of repeating units of -Ala-Ala-Thr-.

The protein resides in the secreted. In terms of biological role, antifreeze proteins lower the blood freezing point. This fish lives in antarctic waters where it experiences water temperatures near -1.9 degrees Celsius. Its blood has a freezing point of about -2.0 degrees Celsius, and 30% of the freezing-point depression is due mainly to the 3 major high molecular weight glycoproteins in the plasma. The polypeptide is Ice-structuring glycoprotein 3 (Pagothenia borchgrevinki (Bald rockcod)).